A 627-amino-acid chain; its full sequence is Pentatricopeptide repeat-containing protein At2g15630, mitochondrial (627 aa).

Residues methionine 1–leucine 29 constitute a mitochondrion transit peptide. PPR repeat units lie at residues serine 154 to proline 188, lysine 189 to serine 223, asparagine 224 to proline 258, threonine 259 to proline 293, aspartate 294 to valine 324, aspartate 326 to proline 360, threonine 361 to leucine 395, aspartate 396 to proline 430, threonine 431 to proline 465, aspartate 466 to proline 500, aspartate 501 to proline 535, aspartate 536 to proline 570, and threonine 571 to proline 605.

Belongs to the PPR family. P subfamily.

It is found in the mitochondrion. The chain is Pentatricopeptide repeat-containing protein At2g15630, mitochondrial from Arabidopsis thaliana (Mouse-ear cress).